The following is a 279-amino-acid chain: Apolipoprotein L domain-containing protein 1 (279 aa).

3 helical membrane passes run 83-105 (SLVA…IVGL), 122-142 (GLGV…SLIF), and 192-212 (IALY…FLIP). The stretch at 226–253 (LKAKIQKLAESLESCTGALDELSEQLES) forms a coiled coil.

Belongs to the apolipoprotein L family. Expressed in neonatal dermal microvascular endothelial cells.

The protein resides in the cell membrane. It is found in the cell junction. It localises to the cytoplasmic vesicle. Its subcellular location is the secretory vesicle. Its function is as follows. Is a modulator of endothelial barrier permeability, required for proper organization of endothelial cell-cell junctions and cytoskeleton. It also plays a role in the modulation of secretory autophagy. May affect blood-brain barrier permeability. The protein is Apolipoprotein L domain-containing protein 1 (APOLD1) of Homo sapiens (Human).